The following is a 149-amino-acid chain: Internal scaffolding protein ORF3 (149 aa).

It belongs to the microvidae B protein family.

Its subcellular location is the host cytoplasm. In terms of biological role, participates in the assembly of the viral procapsid in the cytoplasm. Released from the procapsid upon genome packaging, possibly through affinity displacement by the protein ORF8, or by proteolysis. The sequence is that of Internal scaffolding protein ORF3 from Spiroplasma virus 4 (SpV4).